The following is a 173-amino-acid chain: NADH-ubiquinone oxidoreductase chain 6 (173 aa).

The next 5 helical transmembrane spans lie at M1 to S21, P25 to G45, L53 to L73, W82 to G102, and G141 to L161.

It belongs to the complex I subunit 6 family.

It is found in the mitochondrion membrane. The enzyme catalyses a ubiquinone + NADH + 5 H(+)(in) = a ubiquinol + NAD(+) + 4 H(+)(out). Functionally, core subunit of the mitochondrial membrane respiratory chain NADH dehydrogenase (Complex I) that is believed to belong to the minimal assembly required for catalysis. Complex I functions in the transfer of electrons from NADH to the respiratory chain. The immediate electron acceptor for the enzyme is believed to be ubiquinone. The sequence is that of NADH-ubiquinone oxidoreductase chain 6 (MT-ND6) from Squalus acanthias (Spiny dogfish).